The sequence spans 145 residues: uncharacterized protein (145 aa).

The N-terminal stretch at 1–29 (MHLIRAAGAVCLAVVLIAGCRFNEDQHQA) is a signal peptide. Residues 67 to 101 (KNGTQEKAEIQDKLSGVNQEGEEALDEMKMILSEL) are a coiled coil.

This is an uncharacterized protein from Bacillus subtilis (strain 168).